The sequence spans 158 residues: 6,7-dimethyl-8-ribityllumazine synthase (158 aa).

5-amino-6-(D-ribitylamino)uracil-binding positions include Phe24, Ala58–Glu60, and Ala82–Ile84. (2S)-2-hydroxy-3-oxobutyl phosphate is bound at residue Gly87–Thr88. His90 functions as the Proton donor in the catalytic mechanism. Phe115 serves as a coordination point for 5-amino-6-(D-ribitylamino)uracil. Arg129 lines the (2S)-2-hydroxy-3-oxobutyl phosphate pocket.

It belongs to the DMRL synthase family. As to quaternary structure, forms an icosahedral capsid composed of 60 subunits, arranged as a dodecamer of pentamers.

The catalysed reaction is (2S)-2-hydroxy-3-oxobutyl phosphate + 5-amino-6-(D-ribitylamino)uracil = 6,7-dimethyl-8-(1-D-ribityl)lumazine + phosphate + 2 H2O + H(+). It participates in cofactor biosynthesis; riboflavin biosynthesis; riboflavin from 2-hydroxy-3-oxobutyl phosphate and 5-amino-6-(D-ribitylamino)uracil: step 1/2. Functionally, catalyzes the formation of 6,7-dimethyl-8-ribityllumazine by condensation of 5-amino-6-(D-ribitylamino)uracil with 3,4-dihydroxy-2-butanone 4-phosphate. This is the penultimate step in the biosynthesis of riboflavin. This Ectopseudomonas mendocina (strain ymp) (Pseudomonas mendocina) protein is 6,7-dimethyl-8-ribityllumazine synthase.